We begin with the raw amino-acid sequence, 522 residues long: 2-isopropylmalate synthase (522 aa).

In terms of domain architecture, Pyruvate carboxyltransferase spans 5–267 (VIIFDTTLRD…ETGINAKEIH (263 aa)). Residues Asp14, His202, His204, and Asn238 each contribute to the Mn(2+) site. The regulatory domain stretch occupies residues 392–522 (QLRQLVVQSD…MHKNRELGGV (131 aa)).

It belongs to the alpha-IPM synthase/homocitrate synthase family. LeuA type 1 subfamily. In terms of assembly, homodimer. Mn(2+) is required as a cofactor.

The protein localises to the cytoplasm. It carries out the reaction 3-methyl-2-oxobutanoate + acetyl-CoA + H2O = (2S)-2-isopropylmalate + CoA + H(+). It participates in amino-acid biosynthesis; L-leucine biosynthesis; L-leucine from 3-methyl-2-oxobutanoate: step 1/4. Catalyzes the condensation of the acetyl group of acetyl-CoA with 3-methyl-2-oxobutanoate (2-ketoisovalerate) to form 3-carboxy-3-hydroxy-4-methylpentanoate (2-isopropylmalate). The sequence is that of 2-isopropylmalate synthase from Shewanella oneidensis (strain ATCC 700550 / JCM 31522 / CIP 106686 / LMG 19005 / NCIMB 14063 / MR-1).